Consider the following 225-residue polypeptide: KDP operon transcriptional regulatory protein KdpE (225 aa).

One can recognise a Response regulatory domain in the interval 3-116 (NVLIVEDEQA…ELQARLRVAL (114 aa)). Asp-52 bears the 4-aspartylphosphate mark. Residues 126-225 (DPLVKFSDVT…ETGIGYRFML (100 aa)) constitute a DNA-binding region (ompR/PhoB-type).

In terms of processing, phosphorylated by KdpD.

It is found in the cytoplasm. Member of the two-component regulatory system KdpD/KdpE involved in the regulation of the kdp operon. The protein is KDP operon transcriptional regulatory protein KdpE (kdpE) of Escherichia coli (strain K12).